The sequence spans 54 residues: Ovomucoid (54 aa).

The Kazal-like domain maps to 4-54 (VDCSDYPKPACRMEYMPLCGSDNKTYGNKCNFCNAVVDSNGTLTLSHFGKC). 3 disulfides stabilise this stretch: Cys-6–Cys-36, Cys-14–Cys-33, and Cys-22–Cys-54. Residue Asn-43 is glycosylated (N-linked (GlcNAc...) asparagine).

It localises to the secreted. In Cereopsis novaehollandiae (Cape Barren goose), this protein is Ovomucoid.